The chain runs to 124 residues: uncharacterized protein (124 aa).

The protein resides in the cytoplasm. It localises to the nucleus. This is an uncharacterized protein from Schizosaccharomyces pombe (strain 972 / ATCC 24843) (Fission yeast).